A 438-amino-acid chain; its full sequence is C4-dicarboxylate transport protein 1 (438 aa).

A run of 8 helical transmembrane segments spans residues 20-42, 57-77, 90-112, 160-179, 192-214, 229-251, 324-346, and 361-383; these read LYVQ…PSVA, LIKM…IAHI, ALFY…GNLV, VLQV…ALGK, AHAV…FGAM, LIGL…LGLI, LFIA…LLVA, and FITL…AIVF.

The protein belongs to the dicarboxylate/amino acid:cation symporter (DAACS) (TC 2.A.23) family.

The protein localises to the cell inner membrane. In terms of biological role, responsible for the transport of dicarboxylates such as succinate, fumarate, and malate from the periplasm across the membrane. This chain is C4-dicarboxylate transport protein 1, found in Bradyrhizobium diazoefficiens (strain JCM 10833 / BCRC 13528 / IAM 13628 / NBRC 14792 / USDA 110).